A 508-amino-acid chain; its full sequence is Aromatase (508 aa).

Residue cysteine 437 coordinates heme.

The protein belongs to the cytochrome P450 family. Requires heme as cofactor.

The protein localises to the membrane. It catalyses the reaction testosterone + 3 reduced [NADPH--hemoprotein reductase] + 3 O2 = 17beta-estradiol + formate + 3 oxidized [NADPH--hemoprotein reductase] + 4 H2O + 4 H(+). It carries out the reaction androst-4-ene-3,17-dione + 3 reduced [NADPH--hemoprotein reductase] + 3 O2 = estrone + formate + 3 oxidized [NADPH--hemoprotein reductase] + 4 H2O + 4 H(+). Catalyzes the formation of aromatic C18 estrogens from C19 androgens. The polypeptide is Aromatase (Cyp19a1) (Rattus norvegicus (Rat)).